We begin with the raw amino-acid sequence, 151 residues long: Small ribosomal subunit protein uS13m (151 aa).

The protein belongs to the universal ribosomal protein uS13 family. In terms of assembly, component of the mitochondrial small ribosomal subunit (mt-SSU). Mature yeast 74S mitochondrial ribosomes consist of a small (37S) and a large (54S) subunit. The 37S small subunit contains a 15S ribosomal RNA (15S mt-rRNA) and at least 32 different proteins. The 54S large subunit contains a 21S rRNA (21S mt-rRNA) and at least 45 different proteins.

The protein resides in the mitochondrion. Its function is as follows. Component of the mitochondrial ribosome (mitoribosome), a dedicated translation machinery responsible for the synthesis of mitochondrial genome-encoded proteins, including at least some of the essential transmembrane subunits of the mitochondrial respiratory chain. The mitoribosomes are attached to the mitochondrial inner membrane and translation products are cotranslationally integrated into the membrane. This chain is Small ribosomal subunit protein uS13m (sws2), found in Schizosaccharomyces pombe (strain 972 / ATCC 24843) (Fission yeast).